We begin with the raw amino-acid sequence, 366 residues long: MRFVDEATINVRAGKGGNGCLSFRREKFIPRGGPDGGNGGDGGSVILRPTNRLLSLYDFRLQRNYEARNGQSGMGSQCDGRKGEDLVLELPLGTLVFEVDDEGHEQMIADLSDPDGVFVVARGGRGGKGNEHFKSSTMRAPRFAQKGEPGEERRLRLELKILADAGLLGLPNAGKSTFISRISAARPKIAAYPFTTLTPNLGVMIDEVDPDRRMVIADIPGLIEGAHTGQGLGHRFLKHVERTRFLVHILSIEDIDPENPWTGFDLINEELARFDEVLREREQIEVVNKIDLRTPEEVDALRQQAAQQGRRIFFISAMHGEGIEEVVDAMWRLRDTIDMHEPLVHLQEVEEEDEEFEDIEVVYTRE.

In terms of domain architecture, Obg spans 1 to 162 (MRFVDEATIN…RRLRLELKIL (162 aa)). The OBG-type G domain occupies 163 to 335 (ADAGLLGLPN…VVDAMWRLRD (173 aa)). GTP contacts are provided by residues 169–176 (GLPNAGKS), 194–198 (FTTLT), 218–221 (DIPG), 288–291 (NKID), and 316–318 (SAM). Mg(2+) is bound by residues Ser-176 and Thr-196.

Belongs to the TRAFAC class OBG-HflX-like GTPase superfamily. OBG GTPase family. As to quaternary structure, monomer. Requires Mg(2+) as cofactor.

The protein localises to the cytoplasm. Functionally, an essential GTPase which binds GTP, GDP and possibly (p)ppGpp with moderate affinity, with high nucleotide exchange rates and a fairly low GTP hydrolysis rate. Plays a role in control of the cell cycle, stress response, ribosome biogenesis and in those bacteria that undergo differentiation, in morphogenesis control. In Nitratidesulfovibrio vulgaris (strain ATCC 29579 / DSM 644 / CCUG 34227 / NCIMB 8303 / VKM B-1760 / Hildenborough) (Desulfovibrio vulgaris), this protein is GTPase Obg.